The chain runs to 315 residues: Ribosomal RNA small subunit methyltransferase H (315 aa).

Residues 37–39 (AGH), Asp57, Tyr84, Asp105, and Gln112 contribute to the S-adenosyl-L-methionine site.

Belongs to the methyltransferase superfamily. RsmH family.

It localises to the cytoplasm. The catalysed reaction is cytidine(1402) in 16S rRNA + S-adenosyl-L-methionine = N(4)-methylcytidine(1402) in 16S rRNA + S-adenosyl-L-homocysteine + H(+). Specifically methylates the N4 position of cytidine in position 1402 (C1402) of 16S rRNA. The protein is Ribosomal RNA small subunit methyltransferase H of Lachnospira eligens (strain ATCC 27750 / DSM 3376 / VPI C15-48 / C15-B4) (Eubacterium eligens).